A 59-amino-acid polypeptide reads, in one-letter code: Large ribosomal subunit protein bL32c (59 aa).

Residues Ser-37–Lys-59 form a disordered region.

It belongs to the bacterial ribosomal protein bL32 family.

It localises to the plastid. It is found in the chloroplast. This Saccharum hybrid (Sugarcane) protein is Large ribosomal subunit protein bL32c.